We begin with the raw amino-acid sequence, 645 residues long: Cyclic nucleotide-gated channel rod photoreceptor subunit alpha (645 aa).

The Cytoplasmic portion of the chain corresponds to 1–121; that stretch reads MKVGVIETHH…PAGNMYYNWL (121 aa). The interval 53 to 100 is disordered; that stretch reads NNNSNKDEEKKKKKEKKSKSENKKDGERQKNKEKKEKHKNKDKKKGKE. Positions 70-86 are enriched in basic and acidic residues; sequence SKSENKKDGERQKNKEK. The span at 87 to 96 shows a compositional bias: basic residues; sequence KEKHKNKDKK. Residues 122-143 form a helical membrane-spanning segment; the sequence is FCITMPVMYNWTMIIARACFDE. The Extracellular portion of the chain corresponds to 144-153; that stretch reads LQNDYLAVWF. The helical transmembrane segment at 154–174 threads the bilayer; that stretch reads IVDYVSDVIYIADMFVRTRTG. Residues 175 to 199 are Cytoplasmic-facing; that stretch reads YLEQGLLVKEEQKLKEKYKSSLQFK. Residues 200-218 traverse the membrane as a helical segment; sequence LDFLSIIPTDLLYFKLGLN. Residues 219–223 are Extracellular-facing; sequence YPELR. The chain crosses the membrane as a helical span at residues 224-242; it reads INRLLRVARMFEFFQRTET. The Cytoplasmic portion of the chain corresponds to 243-249; it reads RTNYPNI. A helical transmembrane segment spans residues 250 to 273; the sequence is FRISNLVMYIVIIIHWNACVYYSI. Residues 274–296 are Extracellular-facing; it reads SKAIGFGADTWVYPNTSHPEFAR. 2 helical membrane-spanning segments follow: residues 297–331 and 332–356; these read LTRK…FFVV and VDFL…SNMN. At 357-645 the chain is on the cytoplasmic side; that stretch reads AARAEFQAKI…TDKPGVTKTE (289 aa). 3',5'-cyclic GMP is bound by residues 439-561, Glu-498, and Arg-513; that span reads LLVE…DGLL.

This sequence belongs to the cyclic nucleotide-gated cation channel (TC 1.A.1.5) family.

The protein resides in the membrane. Functionally, visual signal transduction is mediated by a G-protein coupled cascade using cGMP as second messenger. This protein can be activated by cGMP which leads to an opening of the cation channel and thereby causing a depolarization of rod photoreceptors. In Gallus gallus (Chicken), this protein is Cyclic nucleotide-gated channel rod photoreceptor subunit alpha.